We begin with the raw amino-acid sequence, 220 residues long: Metalloproteinase inhibitor 2 (220 aa).

Positions 1-26 (MGAAARTLRLALGLLLLATLLRPADA) are cleaved as a signal peptide. C27 contacts Zn(2+). Involved in metalloproteinase-binding regions lie at residues 27–30 (CSCS) and 95–96 (SA). 6 disulfide bridges follow: C27–C98, C29–C127, C39–C152, C154–C201, C159–C164, and C172–C193. Positions 27–152 (CSCSPVHPQQ…SLNHRYQMGC (126 aa)) constitute an NTR domain.

It belongs to the protease inhibitor I35 (TIMP) family. Interacts (via the C-terminal) with MMP2 (via the C-terminal PEX domain); the interaction inhibits the MMP2 activity. Post-translationally, the activity of TIMP2 is dependent on the presence of disulfide bonds.

It is found in the secreted. In terms of biological role, complexes with metalloproteinases (such as collagenases) and irreversibly inactivates them by binding to their catalytic zinc cofactor. Known to act on MMP-1, MMP-2, MMP-3, MMP-7, MMP-8, MMP-9, MMP-10, MMP-13, MMP-14, MMP-15, MMP-16 and MMP-19. The polypeptide is Metalloproteinase inhibitor 2 (TIMP2) (Homo sapiens (Human)).